Consider the following 917-residue polypeptide: Outer kinetochore KNL1 complex subunit SPC105 (917 aa).

The span at 1 to 17 (MNVDERSRIGGREKDAG) shows a compositional bias: basic and acidic residues. Positions 1 to 38 (MNVDERSRIGGREKDAGPGKGILKQNQSSQMTSSFLEN) are disordered. Polar residues predominate over residues 24–36 (KQNQSSQMTSSFL). S77 is modified (phosphoserine). 3 disordered regions span residues 93 to 172 (QNNE…MEMT), 235 to 282 (TEYE…QPME), and 324 to 343 (HHID…KRRK). The segment covering 106–126 (STNSPTKISSQEEPLVTSTQI) has biased composition (polar residues). Residues 127–137 (DDARTEEKTAA) show a composition bias toward basic and acidic residues. Residues 146 to 149 (MELT) carry the MELT motif. T149 carries the post-translational modification Phosphothreonine; by MPS1. The span at 156-170 (PDSNKASQHDPTSME) shows a compositional bias: polar residues. Positions 165–183 (DPTSMEMTEVFPRSIRQKN) are interacts with the BUB1-BUB3 complex. 2 consecutive short sequence motifs (MELT; degenerate) follow at residues 169–172 (MEMT) and 232–235 (IDLT). Phosphothreonine; by MPS1 occurs at positions 172 and 235. Polar residues predominate over residues 245-257 (NSVSRSTGKSSDY). Basic and acidic residues-rich tracts occupy residues 258–273 (SVER…KSEN) and 324–335 (HHIDESPSEKHA). Residue T356 is modified to Phosphothreonine. S380 carries the phosphoserine modification. Residues 397 to 427 (DVFTIEPGTEDTGMQTATDDEEDGENVDDNG) are disordered. Positions 414–424 (TDDEEDGENVD) are enriched in acidic residues. Residues 507 to 638 (PILEVEAFRC…IKEEIRSLKN (132 aa)) are required for interaction with KRE28. The stretch at 591–628 (ELILAENLNTLKREYEKLNEEVEKVNSIRGKIRKLNEA) forms a coiled coil.

Component of the KNL1/SPC105 complex composed of SPC105 and KRE28. Part of the outer kinetochore KMN network that includes the KNL1, MIS12 and NDC80 complexes. Interacts (via phosphorylated MELT motifs) with BUB1 and BUB3 in the BUB1-BUB3 complex; the interaction is direct. Interacts with the MIS12 complex subunits MTW1 (via C-terminus) and NSL1 (via C-terminus). Interacts with the NDC80 complex subunits SPC24 and SPC25. Interacts with CNN1 (via N-terminus).

The protein resides in the nucleus. It is found in the chromosome. It localises to the centromere. The protein localises to the kinetochore. In terms of biological role, acts as a component of the outer kinetochore KNL1 complex that serves as a docking point for spindle assembly checkpoint components and mediates microtubule-kinetochore interactions. Kinetochores, consisting of a centromere-associated inner segment and a microtubule-contacting outer segment, play a crucial role in chromosome segregation by mediating the physical connection between centromeric DNA and spindle microtubules. The outer kinetochore is made up of the ten-subunit KMN network, comprising the MIS12, NDC80 and KNL1 complexes, and auxiliary microtubule-associated components; together they connect the outer kinetochore with the inner kinetochore, bind microtubules, and mediate interactions with mitotic checkpoint proteins that delay anaphase until chromosomes are bioriented on the spindle. Recruits the BUB1-BUB3 complex to kinetochores when phosphorylated by MPS1, to support spindle assembly checkpoint signaling; the effect is reversed by protein phosphatase 1 (PP1). The KNL1 complex is required for kinetochore binding by the kMAPs (kinetochore-bound microtubule-associated proteins) BIM1, BIK1 and SLK19, and motors CIN8 and KAR3. The chain is Outer kinetochore KNL1 complex subunit SPC105 (SPC105) from Saccharomyces cerevisiae (strain ATCC 204508 / S288c) (Baker's yeast).